A 236-amino-acid chain; its full sequence is ATP synthase subunit a (236 aa).

Transmembrane regions (helical) follow at residues 17 to 37 (WTNL…LFGL), 76 to 96 (SFFV…GLII), 113 to 133 (PVVT…AGVA), 170 to 190 (IFGN…MAFS), and 196 to 216 (MIVS…IGAI).

It belongs to the ATPase A chain family. F-type ATPases have 2 components, CF(1) - the catalytic core - and CF(0) - the membrane proton channel. CF(1) has five subunits: alpha(3), beta(3), gamma(1), delta(1), epsilon(1). CF(0) has three main subunits: a(1), b(2) and c(9-12). The alpha and beta chains form an alternating ring which encloses part of the gamma chain. CF(1) is attached to CF(0) by a central stalk formed by the gamma and epsilon chains, while a peripheral stalk is formed by the delta and b chains.

It is found in the cell membrane. Key component of the proton channel; it plays a direct role in the translocation of protons across the membrane. In Limosilactobacillus fermentum (strain NBRC 3956 / LMG 18251) (Lactobacillus fermentum), this protein is ATP synthase subunit a.